Reading from the N-terminus, the 282-residue chain is Elongation factor Ts (282 aa).

The tract at residues 80–83 (TDFV) is involved in Mg(2+) ion dislocation from EF-Tu.

Belongs to the EF-Ts family.

The protein resides in the cytoplasm. Its function is as follows. Associates with the EF-Tu.GDP complex and induces the exchange of GDP to GTP. It remains bound to the aminoacyl-tRNA.EF-Tu.GTP complex up to the GTP hydrolysis stage on the ribosome. The polypeptide is Elongation factor Ts (Chlamydia caviae (strain ATCC VR-813 / DSM 19441 / 03DC25 / GPIC) (Chlamydophila caviae)).